The primary structure comprises 198 residues: Phage-like element PBSX protein XkdA (198 aa).

To B.subtilis YqaB.

This is Phage-like element PBSX protein XkdA (xkdA) from Bacillus subtilis (strain 168).